We begin with the raw amino-acid sequence, 303 residues long: MTHEQKNILSVRDMEREEIDKLLCSAAAFDRGNYTGRELEGKILAVLFFEPSTRTRMSFSAAMMRLGGKILNLGSVEATSITKGETLSDTIRVISGYCDAIVLRHPKEGAARLASEVASVPVINGGDGAGQHPSQTLLDLFTIRESMRIENIDVGLQGDLRYGRTVHSLAFALAKYNNVRLHTIAPDGLDFPRYIKEDLRDIGVELIAHDHIEQALPELDVLYVTRLQRERFPDPVAFANYASTYRITPELLECAKPGMIVLHPLPRVDEIDPAVDSLPCAKYFEQAHNGVPIRMAMLNEVIN.

Residues Arg54 and Thr55 each contribute to the carbamoyl phosphate site. Position 83 (Lys83) interacts with L-aspartate. Residues Arg104, His132, and Gln135 each coordinate carbamoyl phosphate. Residues Arg164 and Arg226 each contribute to the L-aspartate site. Carbamoyl phosphate contacts are provided by Leu265 and Pro266.

It belongs to the aspartate/ornithine carbamoyltransferase superfamily. ATCase family. Heterooligomer of catalytic and regulatory chains.

It catalyses the reaction carbamoyl phosphate + L-aspartate = N-carbamoyl-L-aspartate + phosphate + H(+). It participates in pyrimidine metabolism; UMP biosynthesis via de novo pathway; (S)-dihydroorotate from bicarbonate: step 2/3. Its function is as follows. Catalyzes the condensation of carbamoyl phosphate and aspartate to form carbamoyl aspartate and inorganic phosphate, the committed step in the de novo pyrimidine nucleotide biosynthesis pathway. The chain is Aspartate carbamoyltransferase catalytic subunit from Methanocorpusculum labreanum (strain ATCC 43576 / DSM 4855 / Z).